A 378-amino-acid polypeptide reads, in one-letter code: Deoxyguanosinetriphosphate triphosphohydrolase-like protein (378 aa).

The interval 1–28 (MLAPYACQPGESRGRQQPESMSTFRSPF) is disordered. The segment covering 15–26 (RQQPESMSTFRS) has biased composition (polar residues). The HD domain maps to 62–198 (RLTHSIEVAQ…AAIADDVAYS (137 aa)).

The protein belongs to the dGTPase family. Type 2 subfamily.

The polypeptide is Deoxyguanosinetriphosphate triphosphohydrolase-like protein (Cereibacter sphaeroides (strain ATCC 17025 / ATH 2.4.3) (Rhodobacter sphaeroides)).